A 280-amino-acid polypeptide reads, in one-letter code: Small ribosomal subunit protein uS3 (280 aa).

Residues 38 to 106 (IRRLLSTGLE…QVQLNILEVR (69 aa)) enclose the KH type-2 domain. The disordered stretch occupies residues 215 to 280 (AAAAPAGAER…PAAEPQSTES (66 aa)). The span at 238-280 (SGASGTTATGTEAGRAAASADESTAAGQPAEAAPAAEPQSTES) shows a compositional bias: low complexity.

The protein belongs to the universal ribosomal protein uS3 family. Part of the 30S ribosomal subunit. Forms a tight complex with proteins S10 and S14.

Binds the lower part of the 30S subunit head. Binds mRNA in the 70S ribosome, positioning it for translation. This is Small ribosomal subunit protein uS3 from Mycobacterium avium (strain 104).